The primary structure comprises 526 residues: Microphthalmia-associated transcription factor (526 aa).

Residues 1-54 (MQSESGIVPDFEVGEEFHEEPKTYYELKSQPLKSSSSAEHPGASKPPISSSSMT) form a disordered region. Phosphoserine; by MTOR is present on Ser-5. A compositionally biased stretch (basic and acidic residues) spans 15–25 (EEFHEEPKTYY). The span at 41 to 54 (PGASKPPISSSSMT) shows a compositional bias: low complexity. Position 180 is a phosphoserine; by MAPK (Ser-180). Residues 224 to 295 (DDVIDDIISL…PNIKRELTAC (72 aa)) are transactivation. Ser-280 is subject to Phosphoserine; by MARK3. Residue Lys-289 forms a Glycyl lysine isopeptide (Lys-Gly) (interchain with G-Cter in SUMO) linkage. Residues 311–364 (QKKDNHNLIERRRRFNINDRIKELGTLIPKSNDPDMRWNKGTILKASVDYIRKL) enclose the bHLH domain. Residues 355–402 (KASVDYIRKLQREQQRAKELENRQKKLEHANRHLLLRIQELEMQARAH) are a coiled coil. Positions 374-395 (LENRQKKLEHANRHLLLRIQEL) are leucine-zipper. The DNA-binding regulation stretch occupies residues 401-431 (AHGLSLIPSTGLCSPDLVNRIIKQEPVLENC). Ser-405 carries the phosphoserine; by GSK3 modification. Phosphoserine is present on Ser-414. A Glycyl lysine isopeptide (Lys-Gly) (interchain with G-Cter in SUMO) cross-link involves residue Lys-423. Ser-491 bears the Phosphoserine mark. Residues 496 to 526 (TDPLLSSVSPGASKTSSRRSSMSMEETEHTC) form a disordered region. The span at 499-509 (LLSSVSPGASK) shows a compositional bias: polar residues. The residue at position 516 (Ser-516) is a Phosphoserine; by RPS6KA1.

The protein belongs to the MiT/TFE family. As to quaternary structure, homodimer or heterodimer; dimerization is mediated via the coiled coil region. Efficient DNA binding requires dimerization with another bHLH protein. Binds DNA in the form of homodimer or heterodimer with either TFE3, TFEB or TFEC. Interacts with small GTPases Rag (RagA/RRAGA, RagB/RRAGB, RagC/RRAGC and/or RagD/RRAGD); promoting its recruitment to lysosomal membrane in the presence of nutrients. Interacts with KARS1. Identified in a complex with HINT1 and CTNNB1. Interacts with VSX2. In terms of processing, when nutrients are present, phosphorylation by MTOR at Ser-5 via non-canonical mTORC1 pathway promotes ubiquitination by the SCF(BTRC) complex, followed by degradation. Phosphorylation at Ser-405 significantly enhances the ability to bind the tyrosinase promoter. Phosphorylation by MARK3/cTAK1 at Ser-280 promotes association with 14-3-3/YWHA adapters and retention in the cytosol. Phosphorylated at Ser-180 and Ser-516 following KIT signaling, triggering a short live activation: Phosphorylation at Ser-180 and Ser-516 by MAPK and RPS6KA1, respectively, activate the transcription factor activity but also promote ubiquitination and subsequent degradation by the proteasome. Phosphorylated in response to blue light (415nm). Ubiquitinated by the SCF(BTRC) and SCF(FBXW11) complexes following phosphorylation ar Ser-5 by MTOR, leading to its degradation by the proteasome. Ubiquitinated following phosphorylation at Ser-180, leading to subsequent degradation by the proteasome. Deubiquitinated by USP13, preventing its degradation. As to expression, expressed in melanocytes (at protein level). In terms of tissue distribution, expressed in the retinal pigment epithelium, brain, and placenta. Expressed in the kidney. Expressed in the kidney and retinal pigment epithelium. As to expression, expressed in the kidney. In terms of tissue distribution, expressed in melanocytes.

The protein resides in the nucleus. It localises to the cytoplasm. It is found in the lysosome membrane. Functionally, transcription factor that acts as a master regulator of melanocyte survival and differentiation as well as melanosome biogenesis. Binds to M-boxes (5'-TCATGTG-3') and symmetrical DNA sequences (E-boxes) (5'-CACGTG-3') found in the promoter of pigmentation genes, such as tyrosinase (TYR). Involved in the cellular response to amino acid availability by acting downstream of MTOR: in the presence of nutrients, MITF phosphorylation by MTOR promotes its inactivation. Upon starvation or lysosomal stress, inhibition of MTOR induces MITF dephosphorylation, resulting in transcription factor activity. Plays an important role in melanocyte development by regulating the expression of tyrosinase (TYR) and tyrosinase-related protein 1 (TYRP1). Plays a critical role in the differentiation of various cell types, such as neural crest-derived melanocytes, mast cells, osteoclasts and optic cup-derived retinal pigment epithelium. The chain is Microphthalmia-associated transcription factor from Homo sapiens (Human).